We begin with the raw amino-acid sequence, 298 residues long: Acetylglutamate kinase (298 aa).

Substrate-binding positions include 68-69 (GG), Arg90, and Asn195.

Belongs to the acetylglutamate kinase family. ArgB subfamily.

Its subcellular location is the cytoplasm. The catalysed reaction is N-acetyl-L-glutamate + ATP = N-acetyl-L-glutamyl 5-phosphate + ADP. Its pathway is amino-acid biosynthesis; L-arginine biosynthesis; N(2)-acetyl-L-ornithine from L-glutamate: step 2/4. Its function is as follows. Catalyzes the ATP-dependent phosphorylation of N-acetyl-L-glutamate. The chain is Acetylglutamate kinase from Hydrogenovibrio crunogenus (strain DSM 25203 / XCL-2) (Thiomicrospira crunogena).